Consider the following 460-residue polypeptide: UDP-N-acetylmuramoylalanine--D-glutamate ligase (460 aa).

Position 120 to 126 (glycine 120 to threonine 126) interacts with ATP.

This sequence belongs to the MurCDEF family.

It localises to the cytoplasm. The enzyme catalyses UDP-N-acetyl-alpha-D-muramoyl-L-alanine + D-glutamate + ATP = UDP-N-acetyl-alpha-D-muramoyl-L-alanyl-D-glutamate + ADP + phosphate + H(+). Its pathway is cell wall biogenesis; peptidoglycan biosynthesis. Its function is as follows. Cell wall formation. Catalyzes the addition of glutamate to the nucleotide precursor UDP-N-acetylmuramoyl-L-alanine (UMA). This is UDP-N-acetylmuramoylalanine--D-glutamate ligase from Lactobacillus delbrueckii subsp. bulgaricus (strain ATCC BAA-365 / Lb-18).